The chain runs to 315 residues: tRNA-cytidine(32) 2-sulfurtransferase (315 aa).

Residues serine 39–serine 44 carry the PP-loop motif motif. [4Fe-4S] cluster-binding residues include cysteine 114, cysteine 117, and cysteine 205.

The protein belongs to the TtcA family. In terms of assembly, homodimer. Mg(2+) is required as a cofactor. The cofactor is [4Fe-4S] cluster.

It is found in the cytoplasm. It catalyses the reaction cytidine(32) in tRNA + S-sulfanyl-L-cysteinyl-[cysteine desulfurase] + AH2 + ATP = 2-thiocytidine(32) in tRNA + L-cysteinyl-[cysteine desulfurase] + A + AMP + diphosphate + H(+). Its pathway is tRNA modification. Catalyzes the ATP-dependent 2-thiolation of cytidine in position 32 of tRNA, to form 2-thiocytidine (s(2)C32). The sulfur atoms are provided by the cysteine/cysteine desulfurase (IscS) system. The polypeptide is tRNA-cytidine(32) 2-sulfurtransferase (Ralstonia pickettii (strain 12J)).